Reading from the N-terminus, the 585-residue chain is MKCCPASILDRFNAIKVINVMGLRLNGRSVPWLLQTRKFINITSPRYTAGRPVILNENQLIRYLPNYTNKGDEEVTRRKKLHEPNGPKFHELPLNQNILDGLSTNFAEYKNSTPLQQRIINALMKSGVSFIVRGWNGSGKSFGAMLSTLSMYFEALKFLKHNPVAGKPVQSGCQVLFIVPNDNLAAQYQFWIERLLHGITEKEELQHIYKILTLTPASLDSFQNRPPYIGITTFPNLQHCIKKNQPILKQFTSQLQLLIVDESDLVIPDHGRSRRLSSPEILADKIFLSSFIQLCKKNLRINMDDENVGGMGIHSQLHGKGSIPTMVFMSASNSKNGVNYLSRYITDQLGIIGIDRKHQWYWNLTSTPSVFHYLIKAQAEPKTTKVTLTNLPYEFVRFNNSMHSIGDNNFSYNNSEAVLQIFAQSVPRILNIEAKKSKLENNILKCVMIVLPKEFNPHSFCNQYKGFAVGNRFWQCRTLSTESLNFSTNLNNVVFVANPSEIRGLHLPSITHIFHLWSTFSGVAYQHIAGRLGAMGQTGKIFNFIIPDYYKSNDFKKTDFRRCILFMLQRVGIRPKSYEFDDEHF.

The Q motif motif lies at 87-117 (PKFHELPLNQNILDGLSTNFAEYKNSTPLQQ). The region spanning 121–351 (NALMKSGVSF…SRYITDQLGI (231 aa)) is the Helicase ATP-binding domain. Residue 134 to 141 (GWNGSGKS) participates in ATP binding. The DEAD box signature appears at 261–264 (DESD). Residues 390–584 (NLPYEFVRFN…PKSYEFDDEH (195 aa)) enclose the Helicase C-terminal domain.

It belongs to the DEAD box helicase family. Component of the MRH5C complex, composed of mrh5, ppr4, mtf2, and sls1. Proteins mtf2 and sls1 form a subcomplex that serves as a scaffold to bring mrh5 and ppr4 together. The MRH5C complex associates with the small subunit of the mitochondrial ribosome.

The protein localises to the mitochondrion. It carries out the reaction ATP + H2O = ADP + phosphate + H(+). Functionally, translation activation factor that as part of the MRH5C complex specifically recruits cox1 mRNA to the mitochondrial ribosome for translation initiation. The chain is Mitochondrial translation ATP-dependent RNA helicase mrh5 from Schizosaccharomyces pombe (strain 972 / ATCC 24843) (Fission yeast).